An 85-amino-acid chain; its full sequence is RNA-binding protein Hfq (85 aa).

The Sm domain maps to 9–68 (DPFLNALRRERIPVSIYLVNGIKLQGQVESFDQFVILLKNTVSQMVYKHAISTVVPARPV).

It belongs to the Hfq family. As to quaternary structure, homohexamer.

RNA chaperone that binds small regulatory RNA (sRNAs) and mRNAs to facilitate mRNA translational regulation in response to envelope stress, environmental stress and changes in metabolite concentrations. Also binds with high specificity to tRNAs. The chain is RNA-binding protein Hfq from Tolumonas auensis (strain DSM 9187 / NBRC 110442 / TA 4).